Here is a 621-residue protein sequence, read N- to C-terminus: Chaperone protein HscA homolog (621 aa).

The protein belongs to the heat shock protein 70 family.

Functionally, chaperone involved in the maturation of iron-sulfur cluster-containing proteins. Has a low intrinsic ATPase activity which is markedly stimulated by HscB. The protein is Chaperone protein HscA homolog of Cupriavidus necator (strain ATCC 17699 / DSM 428 / KCTC 22496 / NCIMB 10442 / H16 / Stanier 337) (Ralstonia eutropha).